The primary structure comprises 527 residues: Bifunctional purine biosynthesis protein PurH (527 aa).

An MGS-like domain is found at Met1–Thr149.

Belongs to the PurH family.

It catalyses the reaction (6R)-10-formyltetrahydrofolate + 5-amino-1-(5-phospho-beta-D-ribosyl)imidazole-4-carboxamide = 5-formamido-1-(5-phospho-D-ribosyl)imidazole-4-carboxamide + (6S)-5,6,7,8-tetrahydrofolate. It carries out the reaction IMP + H2O = 5-formamido-1-(5-phospho-D-ribosyl)imidazole-4-carboxamide. It functions in the pathway purine metabolism; IMP biosynthesis via de novo pathway; 5-formamido-1-(5-phospho-D-ribosyl)imidazole-4-carboxamide from 5-amino-1-(5-phospho-D-ribosyl)imidazole-4-carboxamide (10-formyl THF route): step 1/1. It participates in purine metabolism; IMP biosynthesis via de novo pathway; IMP from 5-formamido-1-(5-phospho-D-ribosyl)imidazole-4-carboxamide: step 1/1. The polypeptide is Bifunctional purine biosynthesis protein PurH (Xanthomonas oryzae pv. oryzae (strain PXO99A)).